The primary structure comprises 230 residues: UPF0173 metal-dependent hydrolase OEOE_1287 (230 aa).

It belongs to the UPF0173 family.

This is UPF0173 metal-dependent hydrolase OEOE_1287 from Oenococcus oeni (strain ATCC BAA-331 / PSU-1).